Reading from the N-terminus, the 156-residue chain is Small ribosomal subunit protein uS7 (156 aa).

The protein belongs to the universal ribosomal protein uS7 family. In terms of assembly, part of the 30S ribosomal subunit. Contacts proteins S9 and S11.

In terms of biological role, one of the primary rRNA binding proteins, it binds directly to 16S rRNA where it nucleates assembly of the head domain of the 30S subunit. Is located at the subunit interface close to the decoding center, probably blocks exit of the E-site tRNA. The sequence is that of Small ribosomal subunit protein uS7 from Rhodopseudomonas palustris (strain BisA53).